Here is a 2359-residue protein sequence, read N- to C-terminus: Nonribosomal peptide synthetase anaPS (2359 aa).

The segment at 239-633 is adenylation 1; the sequence is RNATVHGDTL…VRRKDNQVKI (395 aa). Residues 770–846 enclose the Carrier 1 domain; the sequence is AAQGKGEEAI…ELASAANLSN (77 aa). Ser-807 carries the post-translational modification O-(pantetheine 4'-phosphoryl)serine. The tract at residues 883-1292 is condensation 1; that stretch reads EDIYPSTALQ…VGDLPRMSRQ (410 aa). The adenylation 2 stretch occupies residues 1321-1709; it reads LEYPNACAVS…GRKDSQIKIR (389 aa). The 77-residue stretch at 1842 to 1918 folds into the Carrier 2 domain; that stretch reads APSNSVEQDL…AIANKIGVVS (77 aa). At Ser-1879 the chain carries O-(pantetheine 4'-phosphoryl)serine. The segment at 1936 to 2356 is condensation 2; sequence LTPIQEFFFE…LVKCLEDLAS (421 aa).

It belongs to the NRP synthetase family.

The catalysed reaction is anthranilate + L-tryptophan + 2 ATP = (R)-benzodiazepinedione + 2 AMP + 2 diphosphate + H(+). The protein operates within alkaloid biosynthesis. In terms of biological role, nonribosomal peptide synthetase; part of the gene cluster that mediates the biosynthesis of the prenylated pyrroloindoline diketopiperazine acetylaszonalenin. The first step in the pathway is the formation of (R)-benzodiazepinedione by condensation of tryptophan and anthranilic acid catalyzed by the non-ribosomal peptide synthetase anaPS. The prenyltransferase anaPT then converts (R)-benzodiazepinedione to aszonalenin in the presence of dimethylallyl diphosphate (DMAPP) via C3-prenylation. The last step in the biosynthesis of acetylaszonalenin via acetylation of aszonalenin at position N1 catalyzed by anaAT. The chain is Nonribosomal peptide synthetase anaPS from Neosartorya fischeri (strain ATCC 1020 / DSM 3700 / CBS 544.65 / FGSC A1164 / JCM 1740 / NRRL 181 / WB 181) (Aspergillus fischerianus).